Reading from the N-terminus, the 176-residue chain is Disulfide bond formation protein B (176 aa).

Topologically, residues 1–14 (MLRFLNQCSQGRGA) are cytoplasmic. A helical transmembrane segment spans residues 15-31 (WLLMAFTALALELTALW). Residues 32 to 49 (FQHVMLLKPCVLCIYERC) lie on the Periplasmic side of the membrane. Residues C41 and C44 are joined by a disulfide bond. A helical membrane pass occupies residues 50–65 (ALFGVLGAALIGAIAP). Residues 66–71 (KTPLRY) lie on the Cytoplasmic side of the membrane. A helical transmembrane segment spans residues 72 to 89 (VAMVIWLYSAFRGVQLTY). The Periplasmic segment spans residues 90-144 (EHTMLQLYPSPFATCDFMARFPEWLPLDKWVPQVFVASGDCAERQWEFLGLEMPQ). The cysteines at positions 104 and 130 are disulfide-linked. Residues 145–163 (WLLGIFIAYLIVAVLVVIS) form a helical membrane-spanning segment. The Cytoplasmic portion of the chain corresponds to 164–176 (QPFKAKKRDLFGR).

This sequence belongs to the DsbB family.

The protein resides in the cell inner membrane. Its function is as follows. Required for disulfide bond formation in some periplasmic proteins. Acts by oxidizing the DsbA protein. This Escherichia coli O1:K1 / APEC protein is Disulfide bond formation protein B.